The sequence spans 310 residues: Cysteine synthase (310 aa).

K46 carries the post-translational modification N6-(pyridoxal phosphate)lysine. Residues N76, 180 to 184, and S268 contribute to the pyridoxal 5'-phosphate site; that span reads GTGGT.

This sequence belongs to the cysteine synthase/cystathionine beta-synthase family. As to quaternary structure, homodimer. It depends on pyridoxal 5'-phosphate as a cofactor.

It catalyses the reaction O-acetyl-L-serine + hydrogen sulfide = L-cysteine + acetate. Its pathway is amino-acid biosynthesis; L-cysteine biosynthesis; L-cysteine from L-serine: step 2/2. This chain is Cysteine synthase (cysK), found in Staphylococcus aureus (strain Mu50 / ATCC 700699).